The sequence spans 1264 residues: MPVVWPTLLDLSRDECKRILRKLELEAYAGVISALRAQGDLTKEKKDLLGELSKVLSISTERHRAEVRRAVNDERLTTIAHKMNLSLYLGERPSYSMSGPNSSSEWSIEGRRLVPLMPRLVPQTAFTVTANAVANAAVQHNASLPVPAETASKDGVSCSDEDEKPRKRRRTNSSSSSPVVLKEVPKAVVPVSKTITVPVSGSPKMSNIMQSIANSLPPHMSPVKITFTKPSTQTTNTTTQKVIIVTTSPSSTFVPNILSKSHNYAAVTKLVPTSVIASTTQKPPVVITASQASLVTSSSNGNSSSTSSPISSTVAVTTVVSSTPSVVMSTVAQGVSTSAIKVASTRLPSPKSLVSGPTQILAQFPKQHQQSPKQQLQQVQQQTQQPVAQPSSVSQQQQPQQSALPPGIKPTIQIKQESGVKIITQQVQPSKILPKPVTATLPTSSNSPIMVVSSNGAIMTTKLVTTPTGTQATYTRPTVSPSLGRVATTPGAATYVKTTSGSIITVVPKSLATLGGKIISSNIVSGTTTKITTIPMTSKPNVIVVQKTTGKGTTIQGLPGKNVVTTLLNAGGEKTLQTVPAGAKPAIITATRPITKMIVTQPKGIGSAVQPAAKIIPTKIVYGQQGKTQVLIKPKPVTFQATVVSEQTRQLVTETLQQASRVADASNSSAQEGKEEPQGYTDSSSSSTESSQSSQDSQPVVHVIASRRQDWSEHEIAMETSPTIIYQDVSSESQSATSTIKALLELQQTTVKEKLESKPRQPTIDLSQMAVPIQMTQEKRHSPESPSIAVVESELVAEYITTVSHRSQPQQPSQPQRTLLQHVAQSQTATQTSVVVKSIPASSPGAITHIMQQALSSHTAFTKHSEELGTEEGEVEEMDTLDPQTGLFYRSALTQSQSTKQQKLSQPQLEQTQLQVKTLQCFQTKQKQTIHLQADQLQHKLTQMPQLSIRHQKLNPLQQEQAQPKPDAQHTQHTVVAKDRQLPTLMAQPPQTVVQVLAVKTTQQLPKLQQAPNQPKIYVQPQTPQSQMALPSSEKQPASQVEQPIITQGSSVTKITFEGRQPPTVTKITGGSSVPKLTSPVTSISPIQASEKTAVSDILQMSLMEAQIDTNVEHMVVDPPKKALATNVLTGEAGALPSTHVVVAGMTKCRESCSSPSAVGPPLTTRKIEAAGVPTTGQFMRIQNVGQKKAEESPTEIIIQAIPQYAIPCHSSSNVVVEPSGLLELNNFTSQQLDDDETAMEQDIDSSTEDGTEPSPSQSAVERS.

The tract at residues 1-442 (MPVVWPTLLD…LPKPVTATLP (442 aa)) is interaction with BRCA2. The 99-residue stretch at 16-114 (CKRILRKLEL…EWSIEGRRLV (99 aa)) folds into the ENT domain. The tract at residues 118 to 122 (PRLVP) is interaction with ZMYND11. Positions 145–179 (PVPAETASKDGVSCSDEDEKPRKRRRTNSSSSSPV) are disordered. T171 carries the post-translational modification Phosphothreonine. Phosphoserine is present on residues S173 and S177. O-linked (GlcNAc) serine glycans are attached at residues S192 and S200. S202 carries the phosphoserine modification. T235 carries O-linked (GlcNAc) threonine glycosylation. A compositionally biased stretch (low complexity) spans 364–406 (FPKQHQQSPKQQLQQVQQQTQQPVAQPSSVSQQQQPQQSALPP). Positions 364–407 (FPKQHQQSPKQQLQQVQQQTQQPVAQPSSVSQQQQPQQSALPPG) are disordered. T465 and T470 each carry an O-linked (GlcNAc) threonine glycan. An O-linked (GlcNAc) serine glycan is attached at S521. A compositionally biased stretch (polar residues) spans 660–671 (SRVADASNSSAQ). The interval 660–700 (SRVADASNSSAQEGKEEPQGYTDSSSSSTESSQSSQDSQPV) is disordered. Residues 681–698 (TDSSSSSTESSQSSQDSQ) are compositionally biased toward low complexity. Phosphoserine occurs at positions 782 and 785. O-linked (GlcNAc) threonine glycosylation is present at T1069. S1085 carries the phosphoserine modification. The disordered stretch occupies residues 1232–1264 (QLDDDETAMEQDIDSSTEDGTEPSPSQSAVERS). A compositionally biased stretch (acidic residues) spans 1233–1252 (LDDDETAMEQDIDSSTEDGT). The segment covering 1254–1264 (PSPSQSAVERS) has biased composition (polar residues).

As to quaternary structure, homodimer. Interacts with the transactivation domain of BRCA2. Interacts with CBX1 (via chromoshadow domain). Interacts with ZMYND11. Does not interact with CBX3 or CBX5. Component of a nuclear receptor-mediated transcription complex composed of at least ZNF335, CCAR2 and EMSY; the complex stimulates the transcription of nuclear receptor target genes such as SOX9 and HOXA1. Within the complex interacts with CCAR2 and ZNF335. Components of this complex may associate with components of a histone methylation complex to form a complex at least composed of ZNF335, HCFC1, CCAR2, EMSY, MKI67, RBBP5, ASH2L and WDR5. Within this complex, interacts with ASH2L and RBBP5.

It is found in the nucleus. In terms of biological role, regulator which is able to repress transcription, possibly via its interaction with a multiprotein chromatin remodeling complex that modifies the chromatin. Its interaction with BRCA2 suggests that it may play a central role in the DNA repair function of BRCA2. Mediates ligand-dependent transcriptional activation by nuclear hormone receptors. This is BRCA2-interacting transcriptional repressor EMSY from Mus musculus (Mouse).